Reading from the N-terminus, the 58-residue chain is Small ribosomal subunit protein bS21 (58 aa).

Residues 27–58 form a disordered region; the sequence is GTLQELRKREHYEKPSVKRKRKSEAARKRKKY. Basic and acidic residues predominate over residues 31–42; that stretch reads ELRKREHYEKPS. Positions 43 to 58 are enriched in basic residues; it reads VKRKRKSEAARKRKKY.

This sequence belongs to the bacterial ribosomal protein bS21 family.

The chain is Small ribosomal subunit protein bS21 (rpsU) from Lactococcus lactis subsp. lactis (strain IL1403) (Streptococcus lactis).